The primary structure comprises 163 residues: Large ribosomal subunit protein uL15 (163 aa).

A compositionally biased stretch (basic residues) spans 1 to 29; it reads MSKKRRQRGSRTHGGGSHKNRRGAGHRGG. 2 disordered regions span residues 1–59 and 135–163; these read MSKK…KTRR and VADG…DEES. Basic and acidic residues-rich tracts occupy residues 33-46 and 142-154; these read AGRD…HEPL and LSER…AEKD.

Belongs to the universal ribosomal protein uL15 family. In terms of assembly, part of the 50S ribosomal subunit.

Its function is as follows. Binds to the 23S rRNA. The protein is Large ribosomal subunit protein uL15 of Natronomonas pharaonis (strain ATCC 35678 / DSM 2160 / CIP 103997 / JCM 8858 / NBRC 14720 / NCIMB 2260 / Gabara) (Halobacterium pharaonis).